The primary structure comprises 470 residues: Glutamate--tRNA ligase (470 aa).

The 'HIGH' region motif lies at 9-19 (PSPTGFLHVGG). The 'KMSKS' region motif lies at 236–240 (RLSKR). An ATP-binding site is contributed by K239.

Belongs to the class-I aminoacyl-tRNA synthetase family. Glutamate--tRNA ligase type 1 subfamily. As to quaternary structure, monomer.

The protein localises to the cytoplasm. The catalysed reaction is tRNA(Glu) + L-glutamate + ATP = L-glutamyl-tRNA(Glu) + AMP + diphosphate. Functionally, catalyzes the attachment of glutamate to tRNA(Glu) in a two-step reaction: glutamate is first activated by ATP to form Glu-AMP and then transferred to the acceptor end of tRNA(Glu). The protein is Glutamate--tRNA ligase of Legionella pneumophila subsp. pneumophila (strain Philadelphia 1 / ATCC 33152 / DSM 7513).